The chain runs to 431 residues: Putative serine/threonine-protein kinase A (431 aa).

The region spanning 20–279 (YLNKGIVGLG…VREIFQIPYI (260 aa)) is the Protein kinase domain. Residues 26 to 34 (VGLGSYGEA) and Lys-49 contribute to the ATP site. Asp-147 functions as the Proton acceptor in the catalytic mechanism. Residues 331-429 (DVTHRGHVNK…WVHAIQRGIG (99 aa)) enclose the PH domain.

The protein belongs to the protein kinase superfamily. Ser/Thr protein kinase family.

The catalysed reaction is L-seryl-[protein] + ATP = O-phospho-L-seryl-[protein] + ADP + H(+). It carries out the reaction L-threonyl-[protein] + ATP = O-phospho-L-threonyl-[protein] + ADP + H(+). This is Putative serine/threonine-protein kinase A (NRKA) from Trypanosoma brucei brucei.